The primary structure comprises 334 residues: snRNA-activating protein complex subunit 2 (334 aa).

Disordered regions lie at residues L137–E200 and A271–S306. Over residues I167–R180 the composition is skewed to low complexity.

In terms of assembly, part of the SNAPc complex composed of 5 subunits: SNAPC1, SNAPC2, SNAPC3, SNAPC4 and SNAPC5. SNAPC2 interacts with TBP and SNAPC4.

The protein resides in the nucleus. In terms of biological role, part of the SNAPc complex required for the transcription of both RNA polymerase II and III small-nuclear RNA genes. Binds to the proximal sequence element (PSE), a non-TATA-box basal promoter element common to these 2 types of genes. Recruits TBP and BRF2 to the U6 snRNA TATA box. The chain is snRNA-activating protein complex subunit 2 (SNAPC2) from Homo sapiens (Human).